We begin with the raw amino-acid sequence, 269 residues long: Shikimate dehydrogenase (NADP(+)) (269 aa).

Shikimate is bound by residues 15 to 17 (SLS) and Thr62. Catalysis depends on Lys66, which acts as the Proton acceptor. Positions 86 and 100 each coordinate shikimate. Residues 124–128 (GAGGA), 147–152 (NRTPER), and Ile211 each bind NADP(+). Tyr213 provides a ligand contact to shikimate. Residue Gly234 coordinates NADP(+).

This sequence belongs to the shikimate dehydrogenase family. Homodimer.

It catalyses the reaction shikimate + NADP(+) = 3-dehydroshikimate + NADPH + H(+). Its pathway is metabolic intermediate biosynthesis; chorismate biosynthesis; chorismate from D-erythrose 4-phosphate and phosphoenolpyruvate: step 4/7. Involved in the biosynthesis of the chorismate, which leads to the biosynthesis of aromatic amino acids. Catalyzes the reversible NADPH linked reduction of 3-dehydroshikimate (DHSA) to yield shikimate (SA). In Methanococcoides burtonii (strain DSM 6242 / NBRC 107633 / OCM 468 / ACE-M), this protein is Shikimate dehydrogenase (NADP(+)).